Consider the following 702-residue polypeptide: Elongation factor G (702 aa).

The region spanning 8 to 290 (ERYRNIGISA…AVIDYLPSPV (283 aa)) is the tr-type G domain. Residues 17–24 (AHIDAGKT), 88–92 (DTPGH), and 142–145 (NKMD) contribute to the GTP site.

This sequence belongs to the TRAFAC class translation factor GTPase superfamily. Classic translation factor GTPase family. EF-G/EF-2 subfamily.

It localises to the cytoplasm. Its function is as follows. Catalyzes the GTP-dependent ribosomal translocation step during translation elongation. During this step, the ribosome changes from the pre-translocational (PRE) to the post-translocational (POST) state as the newly formed A-site-bound peptidyl-tRNA and P-site-bound deacylated tRNA move to the P and E sites, respectively. Catalyzes the coordinated movement of the two tRNA molecules, the mRNA and conformational changes in the ribosome. The polypeptide is Elongation factor G (Acidovorax sp. (strain JS42)).